Here is a 932-residue protein sequence, read N- to C-terminus: RNA-binding protein 12 (932 aa).

Residues 97-116 form a disordered region; the sequence is IPPANASRSGPPPSSGMSGR. Residues 98–116 are compositionally biased toward low complexity; the sequence is PPANASRSGPPPSSGMSGR. Residues 304 to 379 form the RRM 1 domain; the sequence is LYVSVHGMPF…RYVEVSPATE (76 aa). A phosphoserine mark is found at S352 and S375. Composition is skewed to polar residues over residues 392 to 401 and 408 to 417; these read KQNMGPSGQT and LPRSKSPSGQ. A disordered region spans residues 392–424; sequence KQNMGPSGQTHPPPQTLPRSKSPSGQKRSRSRS. S420, S422, and S424 each carry phosphoserine. The RRM 2 domain occupies 430–507; sequence FCVYLKGLPF…RFIQVHPITK (78 aa). A Phosphoserine modification is found at S525. Positions 717-734 are enriched in low complexity; that stretch reads NGPPFNFPGNFGGSNAFG. Positions 717–855 are disordered; it reads NGPPFNFPGN…PGFASSSGKP (139 aa). Positions 783–811 are enriched in gly residues; sequence SGFGGGPQNFGNGPGSLGGPPGFGSGPPG. Residues 824–838 show a composition bias toward pro residues; the sequence is AFGPGPGPGPGPGPG. The RRM 3 domain occupies 856-932; that stretch reads GPTVIKVQNM…PIGSRKVNLY (77 aa).

It is found in the nucleus. This is RNA-binding protein 12 (RBM12) from Pongo abelii (Sumatran orangutan).